The primary structure comprises 210 residues: Putative protein-lysine deacylase ABHD14B (210 aa).

Position 91 is a phosphoserine (serine 91). Active-site charge relay system residues include serine 111, aspartate 162, and histidine 188.

Belongs to the AB hydrolase superfamily. ABHD14 family. As to quaternary structure, may interact with TAF1.

Its subcellular location is the cytoplasm. The protein localises to the nucleus. The enzyme catalyses L-lysyl-[protein] + acetyl-CoA = N(6)-acetyl-L-lysyl-[protein] + CoA + H(+). In terms of biological role, acts as an atypical protein-lysine deacetylase in vitro. Catalyzes the deacetylation of lysine residues using CoA as substrate, generating acetyl-CoA and the free amine of protein-lysine residues. Additional experiments are however required to confirm the protein-lysine deacetylase activity in vivo. Has hydrolase activity towards various surrogate p-nitrophenyl (pNp) substrates, such as pNp-butyrate, pNp-acetate and pNp-octanoate in vitro, with a strong preference for pNp-acetate. May activate transcription. This is Putative protein-lysine deacylase ABHD14B from Rattus norvegicus (Rat).